A 251-amino-acid polypeptide reads, in one-letter code: uncharacterized protein (251 aa).

12 to 21 (TGASSQGDIG) lines the NADP(+) pocket. Position 148 (Ser-148) interacts with substrate. Tyr-161 serves as the catalytic Proton acceptor.

The protein belongs to the short-chain dehydrogenases/reductases (SDR) family.

This is an uncharacterized protein from Bacillus subtilis (strain 168).